Here is a 170-residue protein sequence, read N- to C-terminus: Peptide deformylase (170 aa).

Cys-91 and His-133 together coordinate Fe cation. Residue Glu-134 is part of the active site. His-137 is a binding site for Fe cation.

Belongs to the polypeptide deformylase family. Fe(2+) is required as a cofactor.

The catalysed reaction is N-terminal N-formyl-L-methionyl-[peptide] + H2O = N-terminal L-methionyl-[peptide] + formate. Functionally, removes the formyl group from the N-terminal Met of newly synthesized proteins. Requires at least a dipeptide for an efficient rate of reaction. N-terminal L-methionine is a prerequisite for activity but the enzyme has broad specificity at other positions. The sequence is that of Peptide deformylase from Yersinia enterocolitica serotype O:8 / biotype 1B (strain NCTC 13174 / 8081).